The following is a 227-amino-acid chain: Cytochrome c oxidase subunit 2 (227 aa).

At methionine 1–serine 14 the chain is on the mitochondrial intermembrane side. Residues proline 15–methionine 45 form a helical membrane-spanning segment. Residues leucine 46–glutamine 59 are Mitochondrial matrix-facing. Residues glutamate 60–methionine 87 traverse the membrane as a helical segment. Topologically, residues aspartate 88–isoleucine 227 are mitochondrial intermembrane. Positions 161, 196, 198, 200, 204, and 207 each coordinate Cu cation. A Mg(2+)-binding site is contributed by glutamate 198. Tyrosine 218 bears the Phosphotyrosine mark.

This sequence belongs to the cytochrome c oxidase subunit 2 family. Component of the cytochrome c oxidase (complex IV, CIV), a multisubunit enzyme composed of 14 subunits. The complex is composed of a catalytic core of 3 subunits MT-CO1, MT-CO2 and MT-CO3, encoded in the mitochondrial DNA, and 11 supernumerary subunits COX4I, COX5A, COX5B, COX6A, COX6B, COX6C, COX7A, COX7B, COX7C, COX8 and NDUFA4, which are encoded in the nuclear genome. The complex exists as a monomer or a dimer and forms supercomplexes (SCs) in the inner mitochondrial membrane with NADH-ubiquinone oxidoreductase (complex I, CI) and ubiquinol-cytochrome c oxidoreductase (cytochrome b-c1 complex, complex III, CIII), resulting in different assemblies (supercomplex SCI(1)III(2)IV(1) and megacomplex MCI(2)III(2)IV(2)). Found in a complex with TMEM177, COA6, COX18, COX20, SCO1 and SCO2. Interacts with TMEM177 in a COX20-dependent manner. Interacts with COX20. Interacts with COX16. Requires Cu cation as cofactor.

The protein localises to the mitochondrion inner membrane. The enzyme catalyses 4 Fe(II)-[cytochrome c] + O2 + 8 H(+)(in) = 4 Fe(III)-[cytochrome c] + 2 H2O + 4 H(+)(out). Component of the cytochrome c oxidase, the last enzyme in the mitochondrial electron transport chain which drives oxidative phosphorylation. The respiratory chain contains 3 multisubunit complexes succinate dehydrogenase (complex II, CII), ubiquinol-cytochrome c oxidoreductase (cytochrome b-c1 complex, complex III, CIII) and cytochrome c oxidase (complex IV, CIV), that cooperate to transfer electrons derived from NADH and succinate to molecular oxygen, creating an electrochemical gradient over the inner membrane that drives transmembrane transport and the ATP synthase. Cytochrome c oxidase is the component of the respiratory chain that catalyzes the reduction of oxygen to water. Electrons originating from reduced cytochrome c in the intermembrane space (IMS) are transferred via the dinuclear copper A center (CU(A)) of subunit 2 and heme A of subunit 1 to the active site in subunit 1, a binuclear center (BNC) formed by heme A3 and copper B (CU(B)). The BNC reduces molecular oxygen to 2 water molecules using 4 electrons from cytochrome c in the IMS and 4 protons from the mitochondrial matrix. The sequence is that of Cytochrome c oxidase subunit 2 (MT-CO2) from Arvicanthis somalicus (Neumann's grass rat).